The sequence spans 780 residues: Ribosome biogenesis protein BOP1 homolog (780 aa).

A compositionally biased stretch (basic residues) spans Met-1 to Val-11. Positions Met-1–Ile-155 are disordered. Over residues Thr-17–Pro-26 the composition is skewed to polar residues. Acidic residues-rich tracts occupy residues Glu-44–Asp-53, Ser-60–Gly-72, Ala-83–Glu-113, and Glu-145–Asp-154. WD repeat units follow at residues Gly-441–Glu-482, Asn-484–Ile-522, Thr-566–Pro-608, Lys-611–Lys-649, Thr-652–Gln-691, Leu-695–Gln-734, and Arg-750–Thr-780.

Belongs to the WD repeat BOP1/ERB1 family.

Its subcellular location is the nucleus. The protein resides in the nucleolus. The protein localises to the nucleoplasm. In terms of biological role, required for maturation of ribosomal RNAs and formation of the large ribosomal subunit. This is Ribosome biogenesis protein BOP1 homolog from Drosophila virilis (Fruit fly).